Reading from the N-terminus, the 35-residue chain is Photosystem II reaction center protein T (35 aa).

Residues 3-23 (ALVYTFLLVSTLGIIFFAIFF) form a helical membrane-spanning segment.

This sequence belongs to the PsbT family. PSII is composed of 1 copy each of membrane proteins PsbA, PsbB, PsbC, PsbD, PsbE, PsbF, PsbH, PsbI, PsbJ, PsbK, PsbL, PsbM, PsbT, PsbY, PsbZ, Psb30/Ycf12, at least 3 peripheral proteins of the oxygen-evolving complex and a large number of cofactors. It forms dimeric complexes.

It localises to the plastid. Its subcellular location is the chloroplast thylakoid membrane. Its function is as follows. Found at the monomer-monomer interface of the photosystem II (PS II) dimer, plays a role in assembly and dimerization of PSII. PSII is a light-driven water plastoquinone oxidoreductase, using light energy to abstract electrons from H(2)O, generating a proton gradient subsequently used for ATP formation. In Gunnera chilensis (Chilean rhubarb), this protein is Photosystem II reaction center protein T.